We begin with the raw amino-acid sequence, 552 residues long: Arginine--tRNA ligase (552 aa).

The short motif at 129–139 (ANPTGPVTLAS) is the 'HIGH' region element.

Belongs to the class-I aminoacyl-tRNA synthetase family. As to quaternary structure, monomer.

The protein resides in the cytoplasm. The enzyme catalyses tRNA(Arg) + L-arginine + ATP = L-arginyl-tRNA(Arg) + AMP + diphosphate. This is Arginine--tRNA ligase from Frankia alni (strain DSM 45986 / CECT 9034 / ACN14a).